The chain runs to 60 residues: Large ribosomal subunit protein bL32c (60 aa).

The protein belongs to the bacterial ribosomal protein bL32 family.

The protein localises to the plastid. The protein resides in the chloroplast. This chain is Large ribosomal subunit protein bL32c, found in Psilotum nudum (Whisk fern).